The sequence spans 181 residues: Adenine phosphoribosyltransferase (181 aa).

Belongs to the purine/pyrimidine phosphoribosyltransferase family. As to quaternary structure, homodimer.

The protein resides in the cytoplasm. It carries out the reaction AMP + diphosphate = 5-phospho-alpha-D-ribose 1-diphosphate + adenine. It functions in the pathway purine metabolism; AMP biosynthesis via salvage pathway; AMP from adenine: step 1/1. Its function is as follows. Catalyzes a salvage reaction resulting in the formation of AMP, that is energically less costly than de novo synthesis. This is Adenine phosphoribosyltransferase from Acidobacterium capsulatum (strain ATCC 51196 / DSM 11244 / BCRC 80197 / JCM 7670 / NBRC 15755 / NCIMB 13165 / 161).